The sequence spans 496 residues: Probable glycine betaine transporter (496 aa).

Transmembrane regions (helical) follow at residues 11 to 31 (TVLY…VFLP), 49 to 69 (FGWL…GIAI), 89 to 109 (FQWF…FWSV), 136 to 156 (VVFF…GLAL), 188 to 208 (AIDI…LGLG), 219 to 239 (IWGI…ITVI), 260 to 280 (VWLS…VFIL), 306 to 326 (WVGG…PFVG), 341 to 361 (FVFA…AIYG), 396 to 416 (LYAI…VGAA), 441 to 461 (FWGI…GTAA), and 468 to 488 (ASIA…YSIL).

This sequence belongs to the BCCT transporter (TC 2.A.15) family.

It is found in the cell membrane. In terms of biological role, probably acts in the uptake of glycine betaine. May function in the pathway that allows anaerobic methylotrophic growth of D.hafniense using glycine betaine. This is Probable glycine betaine transporter from Desulfitobacterium hafniense (strain Y51).